A 140-amino-acid polypeptide reads, in one-letter code: Chorion class A protein Ld2/Ld41 (140 aa).

Positions 1 to 21 are cleaved as a signal peptide; sequence MNSFALLLVCIQACLVQSVFS.

It belongs to the chorion protein family.

Its function is as follows. This protein is one of many from the eggshell of the gypsy moth. The protein is Chorion class A protein Ld2/Ld41 of Lymantria dispar (Gypsy moth).